A 137-amino-acid chain; its full sequence is Ribosome-binding factor A (137 aa).

The protein belongs to the RbfA family. As to quaternary structure, monomer. Binds 30S ribosomal subunits, but not 50S ribosomal subunits or 70S ribosomes.

It is found in the cytoplasm. In terms of biological role, one of several proteins that assist in the late maturation steps of the functional core of the 30S ribosomal subunit. Associates with free 30S ribosomal subunits (but not with 30S subunits that are part of 70S ribosomes or polysomes). Required for efficient processing of 16S rRNA. May interact with the 5'-terminal helix region of 16S rRNA. The protein is Ribosome-binding factor A of Nitrobacter winogradskyi (strain ATCC 25391 / DSM 10237 / CIP 104748 / NCIMB 11846 / Nb-255).